Here is a 741-residue protein sequence, read N- to C-terminus: Chromosome transmission fidelity protein 18 (741 aa).

183–190 contributes to the ATP binding site; sequence GPPGIGKT.

Belongs to the activator 1 small subunits family. CTF18 subfamily. As to quaternary structure, component of the CTF18-RFC complex, which consists of CTF18, CTF8, DCC1, RFC2, RFC3, RFC4 and RFC5. CTF18 interacts with ECO1.

The protein localises to the nucleus. Essential for the fidelity of chromosome transmission. Required for the DNA replication block checkpoint. Component of the RFC-like complex CTF18-RFC which is required for efficient establishment of chromosome cohesion during S-phase and may load or unload POL30/PCNA. During a clamp loading circle, the RFC:clamp complex binds to DNA and the recognition of the double-stranded/single-stranded junction stimulates ATP hydrolysis by RFC. The complex presumably provides bipartite ATP sites in which one subunit supplies a catalytic site for hydrolysis of ATP bound to the neighboring subunit. Dissociation of RFC from the clamp leaves the clamp encircling DNA. In Saccharomyces cerevisiae (strain ATCC 204508 / S288c) (Baker's yeast), this protein is Chromosome transmission fidelity protein 18 (CTF18).